The following is a 489-amino-acid chain: MTFRNCVAVDLGASSGRVMLARYERECRSLTLREIHRFNNGLHSQNGYVTWDVDSLESAIRLGLNKVCEEGIRIDSIGIDTWGVDFVLLDQQGQRVGLPVAYRDSRTNGLMPQAQQQLGKRDIYQRSGIQFLPFNTLYQLRALTEQQPELIPHIAHALLMPDYFSYRLTGKMNWEYTNATTTQLVNINSDDWDESLLAWSGANKAWFGRPTHPGNVIGHWICPQGNEIPVVAVASHDTASAVIASPLNGSRAAYLSSGTWSLMGFESQTPFTNDTALAANITNEGGAEGRYRVLKNIMGLWLLQRVLQERQINDLPALIAATQALPACRFIINPNDDRFINPDEMCSEIQAACRETAQPIPGSDAELARCIFDSLALLYADVLHELAQLRGEDFSQLHIVGGGCQNTLLNQLCADACGIRVIAGPVEASTLGNIGIELMTLDELNNVDDFRQVVSTTANLTTFTPNPDSEIAHYVAQIHSTRQTKELCA.

13 to 17 (ASSGR) is a binding site for ATP. A disulfide bond links C68 and C222. Residues G83 and 236-238 (HDT) contribute to the substrate site. D237 serves as the catalytic Proton acceptor. ATP is bound at residue T259. N296 is a binding site for substrate. Q304 serves as a coordination point for ATP. The cysteines at positions 353 and 370 are disulfide-linked. Residue G402 participates in ATP binding. A disulfide bridge links C413 with C417.

The protein belongs to the rhamnulokinase family. Requires Mg(2+) as cofactor.

The catalysed reaction is L-rhamnulose + ATP = L-rhamnulose 1-phosphate + ADP + H(+). Its pathway is carbohydrate degradation; L-rhamnose degradation; glycerone phosphate from L-rhamnose: step 2/3. Involved in the catabolism of L-rhamnose (6-deoxy-L-mannose). Catalyzes the transfer of the gamma-phosphate group from ATP to the 1-hydroxyl group of L-rhamnulose to yield L-rhamnulose 1-phosphate. This is Rhamnulokinase from Shigella flexneri serotype 5b (strain 8401).